A 66-amino-acid chain; its full sequence is Large ribosomal subunit protein uL29 (66 aa).

The protein belongs to the universal ribosomal protein uL29 family.

The sequence is that of Large ribosomal subunit protein uL29 from Lysinibacillus sphaericus (strain C3-41).